We begin with the raw amino-acid sequence, 517 residues long: Glutamate--tRNA ligase (517 aa).

A 'HIGH' region motif is present at residues 14–24 (PSPTGPLHIGG). Positions 266 to 270 (KLSKR) match the 'KMSKS' region motif. Lysine 269 is a binding site for ATP.

This sequence belongs to the class-I aminoacyl-tRNA synthetase family. Glutamate--tRNA ligase type 1 subfamily. As to quaternary structure, monomer.

The protein localises to the cytoplasm. It catalyses the reaction tRNA(Glu) + L-glutamate + ATP = L-glutamyl-tRNA(Glu) + AMP + diphosphate. In terms of biological role, catalyzes the attachment of glutamate to tRNA(Glu) in a two-step reaction: glutamate is first activated by ATP to form Glu-AMP and then transferred to the acceptor end of tRNA(Glu). The polypeptide is Glutamate--tRNA ligase (Cytophaga hutchinsonii (strain ATCC 33406 / DSM 1761 / CIP 103989 / NBRC 15051 / NCIMB 9469 / D465)).